Reading from the N-terminus, the 135-residue chain is Bacilliredoxin CHU_0972 (135 aa).

Belongs to the bacilliredoxin family.

This Cytophaga hutchinsonii (strain ATCC 33406 / DSM 1761 / CIP 103989 / NBRC 15051 / NCIMB 9469 / D465) protein is Bacilliredoxin CHU_0972.